The chain runs to 435 residues: 4-hydroxy-3-methylbut-2-en-1-yl diphosphate synthase (flavodoxin) (435 aa).

Residues 1-15 (MTDVDLRARPQEGMK) show a composition bias toward basic and acidic residues. The interval 1 to 24 (MTDVDLRARPQEGMKEIPAGPKGR) is disordered. The [4Fe-4S] cluster site is built by C316, C319, C362, and E369.

This sequence belongs to the IspG family. [4Fe-4S] cluster serves as cofactor.

It carries out the reaction (2E)-4-hydroxy-3-methylbut-2-enyl diphosphate + oxidized [flavodoxin] + H2O + 2 H(+) = 2-C-methyl-D-erythritol 2,4-cyclic diphosphate + reduced [flavodoxin]. Its pathway is isoprenoid biosynthesis; isopentenyl diphosphate biosynthesis via DXP pathway; isopentenyl diphosphate from 1-deoxy-D-xylulose 5-phosphate: step 5/6. Converts 2C-methyl-D-erythritol 2,4-cyclodiphosphate (ME-2,4cPP) into 1-hydroxy-2-methyl-2-(E)-butenyl 4-diphosphate. This is 4-hydroxy-3-methylbut-2-en-1-yl diphosphate synthase (flavodoxin) from Afipia carboxidovorans (strain ATCC 49405 / DSM 1227 / KCTC 32145 / OM5) (Oligotropha carboxidovorans).